The chain runs to 798 residues: Penicillin-binding protein 1A (798 aa).

The Cytoplasmic portion of the chain corresponds to 2–9 (IKKILTTC). A helical; Signal-anchor for type II membrane protein membrane pass occupies residues 10–30 (FGLFFGFCVFGVGLVAIAILV). Residues 31 to 798 (TYPKLPSLDS…SKQQQLDSLF (768 aa)) are Periplasmic-facing. The transglycosylase stretch occupies residues 50 to 218 (LTIYSADGEV…SAYNPIVNPE (169 aa)). The Proton donor; for transglycosylase activity role is filled by glutamate 88. Residues 378–700 (RRALGFAARA…GTIAVPVWVD (323 aa)) are transpeptidase. Serine 461 acts as the Acyl-ester intermediate; for transpeptidase activity in catalysis. The tract at residues 739 to 798 (LMLDNSGIAPQPSRRAKEDDEAAVENEQQGRSDETRQDVQETPVLPSNTDSKQQQLDSLF) is disordered. The span at 766–777 (QQGRSDETRQDV) shows a compositional bias: basic and acidic residues. A compositionally biased stretch (polar residues) spans 783–798 (LPSNTDSKQQQLDSLF).

In the N-terminal section; belongs to the glycosyltransferase 51 family. It in the C-terminal section; belongs to the transpeptidase family.

It is found in the cell inner membrane. The catalysed reaction is [GlcNAc-(1-&gt;4)-Mur2Ac(oyl-L-Ala-gamma-D-Glu-L-Lys-D-Ala-D-Ala)](n)-di-trans,octa-cis-undecaprenyl diphosphate + beta-D-GlcNAc-(1-&gt;4)-Mur2Ac(oyl-L-Ala-gamma-D-Glu-L-Lys-D-Ala-D-Ala)-di-trans,octa-cis-undecaprenyl diphosphate = [GlcNAc-(1-&gt;4)-Mur2Ac(oyl-L-Ala-gamma-D-Glu-L-Lys-D-Ala-D-Ala)](n+1)-di-trans,octa-cis-undecaprenyl diphosphate + di-trans,octa-cis-undecaprenyl diphosphate + H(+). The enzyme catalyses Preferential cleavage: (Ac)2-L-Lys-D-Ala-|-D-Ala. Also transpeptidation of peptidyl-alanyl moieties that are N-acyl substituents of D-alanine.. It participates in cell wall biogenesis; peptidoglycan biosynthesis. Functionally, cell wall formation. Synthesis of cross-linked peptidoglycan from the lipid intermediates. The enzyme has a penicillin-insensitive transglycosylase N-terminal domain (formation of linear glycan strands) and a penicillin-sensitive transpeptidase C-terminal domain (cross-linking of the peptide subunits). Essential for cell wall synthesis. This Neisseria gonorrhoeae (strain ATCC 700825 / FA 1090) protein is Penicillin-binding protein 1A (mrcA).